A 988-amino-acid polypeptide reads, in one-letter code: Echinoderm microtubule-associated protein-like 4 (988 aa).

Met-1 bears the N-acetylmethionine mark. Positions Met-1–Asp-260 are microtubule-binding. Phosphoserine is present on residues Ser-7, Ser-13, Ser-16, Ser-61, and Ser-79. A coiled-coil region spans residues Ala-14–Lys-63. Position 96 is a phosphothreonine (Thr-96). Residues Thr-106–Lys-194 form a disordered region. Residues Gly-114–Ser-134 are compositionally biased toward basic and acidic residues. Ser-134 carries the post-translational modification Phosphoserine; by NEK7. Low complexity predominate over residues Gln-137–Gln-155. Phosphoserine; by NEK6 is present on Ser-144. Position 146 is a phosphoserine; by NEK7 (Ser-146). Residues Ile-156–Pro-168 show a composition bias toward polar residues. Ser-171 is subject to Phosphoserine. Positions Pro-176 to Asn-193 are enriched in basic and acidic residues. Residue Ser-200 is modified to Phosphoserine. The residue at position 201 (Thr-201) is a Phosphothreonine. Tyr-237 carries the post-translational modification Phosphotyrosine. Thr-248 is modified (phosphothreonine). 13 WD repeats span residues Leu-270–Tyr-308, Thr-312–Ser-359, Val-367–Trp-407, Ala-414–Trp-449, Arg-456–Lys-495, Gln-511–His-549, Glu-554–Thr-590, Asp-593–Ser-632, Arg-636–Ala-673, Val-679–Val-715, Tyr-722–Ile-761, Arg-771–Tyr-829, and Ala-836–Leu-875. Thr-620 carries the phosphothreonine; by NEK6 and NEK7 modification. Residues Ile-887–Cys-988 form a disordered region. The segment covering Ala-890–Arg-904 has biased composition (polar residues). Residues Ser-906, Ser-908, and Ser-914 each carry the phosphoserine modification. Residues Met-927–Glu-939 are compositionally biased toward polar residues. The segment covering Pro-944–Ser-953 has biased composition (acidic residues).

The protein belongs to the WD repeat EMAP family. In terms of assembly, homotrimer; self-association is mediated by the N-terminal coiled coil. Interacts (via WD repeats) with NUDC. Interacts with alpha- and beta-tubulin during mitosis. Phosphorylated during mitosis. Phosphorylation at Ser-144 and Ser-146 promotes its dissociation from microtubules during mitosis which is required for efficient chromosome congression.

The protein localises to the cytoplasm. It localises to the cytoskeleton. The protein resides in the spindle. Its subcellular location is the microtubule organizing center. It is found in the midbody. Essential for the stability of microtubules (MTs). Essential for the formation of MTs. Required for the organization of the mitotic spindle and for the proper attachment of kinetochores to MTs. Promotes the recruitment of NUDC to the mitotic spindle for mitotic progression. The chain is Echinoderm microtubule-associated protein-like 4 (Eml4) from Mus musculus (Mouse).